Consider the following 266-residue polypeptide: MILLVDIGNSRIKWARLDGGKPADMGAVTRGKTGIKRVLSKAWKEFGDVNRVVVANVGGPKVAEQLEQWLQTHWQIAPEFLTARSNGYGIRNAYSKPETLGIDRWLGLVAVRQRYRGGDRKKAICIVDCGTAITLDVLAADGKHLGGLIIPGLAMMPKFLADHTAGINETTEAVEYSLLASTTSAAINAGALYGAVAFIDRVSHDVAVEMKGELKFVITGGDAPRILPLLRDKYEHLPDLVLRGLARVAKDTSKVRRETDLDCAAQ.

6–13 is an ATP binding site; that stretch reads DIGNSRIK. Substrate is bound by residues Y94 and 101 to 104; that span reads GIDR. The active-site Proton acceptor is D103. D128 lines the K(+) pocket. ATP is bound at residue T131. T183 contributes to the substrate binding site.

This sequence belongs to the type III pantothenate kinase family. In terms of assembly, homodimer. The cofactor is NH4(+). K(+) serves as cofactor.

The protein localises to the cytoplasm. The catalysed reaction is (R)-pantothenate + ATP = (R)-4'-phosphopantothenate + ADP + H(+). The protein operates within cofactor biosynthesis; coenzyme A biosynthesis; CoA from (R)-pantothenate: step 1/5. Catalyzes the phosphorylation of pantothenate (Pan), the first step in CoA biosynthesis. The sequence is that of Type III pantothenate kinase from Nitrosococcus oceani (strain ATCC 19707 / BCRC 17464 / JCM 30415 / NCIMB 11848 / C-107).